A 150-amino-acid chain; its full sequence is Snake venom vascular endothelial growth factor toxin barietin (150 aa).

A signal peptide spans 1-24; it reads MAAYLLAVAILFCIQGWPSGTVQG. Pyrrolidone carboxylic acid (Glu) is present on glutamate 25. Intrachain disulfides connect cysteine 38/cysteine 80, cysteine 69/cysteine 115, and cysteine 73/cysteine 117. The interval 119–150 is disordered; the sequence is PRSGSRVNIGKHKRSPEEGEREPSSPLTPGSL. Positions 122-150 are excised as a propeptide; that stretch reads GSRVNIGKHKRSPEEGEREPSSPLTPGSL.

This sequence belongs to the PDGF/VEGF growth factor family. Snake venom VEGF subfamily. In terms of assembly, homodimer; disulfide-linked. Interacts with high affinity with VEGF receptor-2 (KDR), and with a lower affinity with VEGF receptor-1 (FLT1). Does not bind VEGF receptor-3 (FLT4) and neuropilin-1 (NRP1). In terms of tissue distribution, expressed by the venom gland.

It is found in the secreted. In terms of biological role, snake venom VEGFs that may contribute to venom dispersion and prey subjugation by inducing vascular permeability and hypotension. This protein induces an increase in capillary permeability after intradermal injection, as well as a drastic hypotensive effect after intravenous injection. The hypotension is mediated by nitric oxide (NO), which is produced by VEGF-activated endothelium NO synthase. Also induces angiogenesis in vitro, probably through VEGF receptor (KDR/VEGFR-2) signaling. In Bitis arietans (African puff adder), this protein is Snake venom vascular endothelial growth factor toxin barietin.